Here is a 152-residue protein sequence, read N- to C-terminus: Protein SprT-like (152 aa).

Positions 6 to 151 constitute a SprT-like domain; the sequence is LQQLVCRISL…SKCLGKLELL (146 aa). Residue His67 participates in Zn(2+) binding. Residue Glu68 is part of the active site. Residue His71 participates in Zn(2+) binding.

The protein belongs to the SprT family. Zn(2+) serves as cofactor.

The protein localises to the cytoplasm. This Lysinibacillus sphaericus (strain C3-41) protein is Protein SprT-like.